Reading from the N-terminus, the 207-residue chain is Cyclic di-AMP synthase CdaS (207 aa).

Positions 13-37 (AFKGKIQVYLEQILGDASLILKTLH) form a coiled coil. Residues 63 to 205 (SFYLQSYIEE…DGVLYPLISP (143 aa)) enclose the DAC domain.

It belongs to the adenylate cyclase family. DacB/CdaS subfamily. In terms of assembly, forms dimers and probably also hexamers; the dimer may be active while the hexamer may not be active.

It carries out the reaction 2 ATP = 3',3'-c-di-AMP + 2 diphosphate. One of 3 paralogous diadenylate cyclases (DAC) in this bacteria, catalyzing the condensation of 2 ATP molecules into cyclic di-AMP (c-di-AMP). Upon expression in E.coli leads to c-di-AMP synthesis. Overexpression of the hyperactive mutant (L44F) in the absence of c-di-AMP phosphodiesterase GdpP leads to growth defects in log phase (long curly cell filaments) that disappear upon sporulation; spore formation is normal, showing sporulation is insensitive to the excess c-di-AMP. In B.subtilis c-di-AMP is a second messenger that mediates growth, DNA repair and cell wall homeostasis; it is toxic when present in excess. This chain is Cyclic di-AMP synthase CdaS, found in Bacillus subtilis (strain 168).